Reading from the N-terminus, the 539-residue chain is Putative serine/threonine-protein kinase L670 (539 aa).

In terms of domain architecture, Cyclin N-terminal spans 1–115; sequence MSLFNNHPEL…ILKVFKFGLH (115 aa). The Protein kinase domain occupies 258 to 519; that stretch reads MNVIEKLGIG…VLKIFSECFV (262 aa). ATP-binding positions include 264–272 and K285; that span reads LGIGSFGLV. D375 functions as the Proton acceptor in the catalytic mechanism.

The protein belongs to the protein kinase superfamily. Ser/Thr protein kinase family.

It catalyses the reaction L-seryl-[protein] + ATP = O-phospho-L-seryl-[protein] + ADP + H(+). The catalysed reaction is L-threonyl-[protein] + ATP = O-phospho-L-threonyl-[protein] + ADP + H(+). In Acanthamoeba polyphaga mimivirus (APMV), this protein is Putative serine/threonine-protein kinase L670.